A 300-amino-acid chain; its full sequence is GTPase Era (300 aa).

The Era-type G domain occupies 7–175 (KSGFAVMAGL…KTAVAETLPF (169 aa)). The G1 stretch occupies residues 15–22 (GLPNAGKS). 15–22 (GLPNAGKS) contributes to the GTP binding site. The G2 stretch occupies residues 41 to 45 (QMTRQ). Residues 62–65 (DTPG) form a G3 region. Residues 62–66 (DTPGF) and 124–127 (NKAD) each bind GTP. The segment at 124-127 (NKAD) is G4. The segment at 154–156 (ISA) is G5. Residues 198 to 283 (IREQIFNLYE…RLELEVSVEP (86 aa)) form the KH type-2 domain.

The protein belongs to the TRAFAC class TrmE-Era-EngA-EngB-Septin-like GTPase superfamily. Era GTPase family. In terms of assembly, monomer.

It localises to the cytoplasm. The protein localises to the cell inner membrane. In terms of biological role, an essential GTPase that binds both GDP and GTP, with rapid nucleotide exchange. Plays a role in 16S rRNA processing and 30S ribosomal subunit biogenesis and possibly also in cell cycle regulation and energy metabolism. This is GTPase Era from Elusimicrobium minutum (strain Pei191).